The sequence spans 358 residues: Histidinol-phosphate aminotransferase (358 aa).

Lys-217 bears the N6-(pyridoxal phosphate)lysine mark.

It belongs to the class-II pyridoxal-phosphate-dependent aminotransferase family. Histidinol-phosphate aminotransferase subfamily. As to quaternary structure, homodimer. It depends on pyridoxal 5'-phosphate as a cofactor.

The enzyme catalyses L-histidinol phosphate + 2-oxoglutarate = 3-(imidazol-4-yl)-2-oxopropyl phosphate + L-glutamate. It functions in the pathway amino-acid biosynthesis; L-histidine biosynthesis; L-histidine from 5-phospho-alpha-D-ribose 1-diphosphate: step 7/9. The chain is Histidinol-phosphate aminotransferase from Ruminiclostridium cellulolyticum (strain ATCC 35319 / DSM 5812 / JCM 6584 / H10) (Clostridium cellulolyticum).